Here is a 303-residue protein sequence, read N- to C-terminus: Cyclin-dependent kinase 4 (303 aa).

A2 carries the N-acetylalanine modification. One can recognise a Protein kinase domain in the interval 6–295 (YEPVAEIGVG…AFRALQHSYL (290 aa)). ATP contacts are provided by residues 12 to 20 (IGVGAYGTV) and K35. The segment at 50–56 (PISTVRE) is required for binding D-type cyclins. The active-site Proton acceptor is the D140. Residue T172 is modified to Phosphothreonine; by CAK.

This sequence belongs to the protein kinase superfamily. CMGC Ser/Thr protein kinase family. CDC2/CDKX subfamily. Component of the D-CDK4 complex, composed of CDK4 and some D-type G1 cyclin (CCND1, CCND2 or CCND3). Interacts directly in the complex with CCND1, CCND2 or CCND3. Interacts with SEI1 and ZNF655. Forms a ternary complex, cyclin D-CDK4-CDKN1B, involved in modulating CDK4 enzymatic activity. Interacts directly with CDKN1B (phosphorylated on 'Tyr-88' and 'Tyr-89'); the interaction allows assembly of the cyclin D-CDK4 complex, Thr-172 phosphorylation, nuclear translocation and enhances the cyclin D-CDK4 complex activity. CDK4 activity is either inhibited or enhanced depending on stoichiometry of complex. The non-tyrosine-phosphorylated form of CDKN1B prevents T-loop phosphorylation of CDK4 producing inactive CDK4. Interacts (unphosphorylated form) with CDK2. Also forms ternary complexes with CDKN1A or CDKN2A. Interacts directly with CDKN1A (via its N-terminal); the interaction promotes the assembly of the cyclin D-CDK4 complex, its nuclear translocation and promotes the cyclin D-dependent enzyme activity of CDK4. Interacts with CCND1; the interaction is prevented with the binding of CCND1 to INSM1 during cell cycle progression. Probably forms a complex composed of chaperones HSP90 and HSP70, co-chaperones CDC37, PPP5C, TSC1 and client protein TSC2, CDK4, AKT, RAF1 and NR3C1; this complex does not contain co-chaperones STIP1/HOP and PTGES3/p23. Interacts with CEBPA (when phosphorylated). Interacts with FNIP1 and FNIP2. In terms of processing, phosphorylation at Thr-172 is required for enzymatic activity. Phosphorylated, in vitro, at this site by CCNH-CDK7, but, in vivo, appears to be phosphorylated by a proline-directed kinase. In the cyclin D-CDK4-CDKN1B complex, this phosphorylation and consequent CDK4 enzyme activity, is dependent on the tyrosine phosphorylation state of CDKN1B. Thus, in proliferating cells, CDK4 within the complex is phosphorylated on Thr-172 in the T-loop. In resting cells, phosphorylation on Thr-172 is prevented by the non-tyrosine-phosphorylated form of CDKN1B.

It localises to the cytoplasm. The protein localises to the nucleus. It is found in the nucleus membrane. It carries out the reaction L-seryl-[protein] + ATP = O-phospho-L-seryl-[protein] + ADP + H(+). It catalyses the reaction L-threonyl-[protein] + ATP = O-phospho-L-threonyl-[protein] + ADP + H(+). Its activity is regulated as follows. Both phosphorylation at Thr-172 and binding of a D-type cyclin are necessary for enzymatic activity. Full activation of the cyclin-D-CDK4 complex appears to require other factors such as recruitment of the substrate via a substrate recruitment motif, and/or formation of the CDKN1B ternary complex. Inhibited by INK4 family members. In resting cells, the non-tyrosine-phosphorylated form of CDKN1B prevents phosphorylation at Thr-172 and inactivation, while, in proliferating cells, tyrosine phosphorylation of CDKN1B allows phosphorylation of Thr-172 of CDK4 and subsequent activation. Functionally, ser/Thr-kinase component of cyclin D-CDK4 (DC) complexes that phosphorylate and inhibit members of the retinoblastoma (RB) protein family including RB1 and regulate the cell-cycle during G(1)/S transition. Phosphorylation of RB1 allows dissociation of the transcription factor E2F from the RB/E2F complexes and the subsequent transcription of E2F target genes which are responsible for the progression through the G(1) phase. Hypophosphorylates RB1 in early G(1) phase. Cyclin D-CDK4 complexes are major integrators of various mitogenenic and antimitogenic signals. Also phosphorylates SMAD3 in a cell-cycle-dependent manner and represses its transcriptional activity. Component of the ternary complex, cyclin D/CDK4/CDKN1B, required for nuclear translocation and activity of the cyclin D-CDK4 complex. The protein is Cyclin-dependent kinase 4 (CDK4) of Sus scrofa (Pig).